The sequence spans 282 residues: NH(3)-dependent NAD(+) synthetase (282 aa).

51 to 58 (GISGGVDS) contacts ATP. Mg(2+) is bound at residue D57. Residue R148 coordinates deamido-NAD(+). An ATP-binding site is contributed by T168. Residue E173 participates in Mg(2+) binding. K181 and D188 together coordinate deamido-NAD(+). Residues K197 and T219 each contribute to the ATP site. 268-269 (HK) is a binding site for deamido-NAD(+).

The protein belongs to the NAD synthetase family. Homodimer.

The enzyme catalyses deamido-NAD(+) + NH4(+) + ATP = AMP + diphosphate + NAD(+) + H(+). Its pathway is cofactor biosynthesis; NAD(+) biosynthesis; NAD(+) from deamido-NAD(+) (ammonia route): step 1/1. Catalyzes the ATP-dependent amidation of deamido-NAD to form NAD. Uses ammonia as a nitrogen source. This Burkholderia ambifaria (strain MC40-6) protein is NH(3)-dependent NAD(+) synthetase.